Reading from the N-terminus, the 256-residue chain is MNNIWWQTKGQGNVHLVLLHGWGLNAEVWRCIDEELSSHFTLHLVDLPGFGRSRGFGALSLADMAEVVLRQAPDKAIWLGWSLGGLVASQIALTHPERVLALVTVASSPCFSARDEWPGIKPDVLAGFQQQLSDDFQRTVERFLALQTMGTETARQDARALKKTVLALPMPEVDVLNGGLEILKTVDLRQPLQNVPMPFLRLYGYLDGLVPRKVVPMLDKLWPHSESYIFAKAAHAPFISHPDEFCHLLVALKQRV.

Positions H15–P242 constitute an AB hydrolase-1 domain. Residues W22, S82 to L83, and F143 to Q147 contribute to the substrate site. The Nucleophile role is filled by S82. Residues D207 and H235 contribute to the active site. H235 is a binding site for substrate.

Belongs to the AB hydrolase superfamily. Carboxylesterase BioH family. Monomer.

It is found in the cytoplasm. The enzyme catalyses 6-carboxyhexanoyl-[ACP] methyl ester + H2O = 6-carboxyhexanoyl-[ACP] + methanol + H(+). It participates in cofactor biosynthesis; biotin biosynthesis. The physiological role of BioH is to remove the methyl group introduced by BioC when the pimeloyl moiety is complete. It allows to synthesize pimeloyl-ACP via the fatty acid synthetic pathway through the hydrolysis of the ester bonds of pimeloyl-ACP esters. The polypeptide is Pimeloyl-[acyl-carrier protein] methyl ester esterase (Escherichia coli O6:H1 (strain CFT073 / ATCC 700928 / UPEC)).